The following is a 1013-amino-acid chain: Receptor-type tyrosine-protein phosphatase N2 (1013 aa).

A signal peptide spans 1–19 (MALPLLLLLLLLLPPRVLP). Residues 1-419 (MALPLLLLLL…PGALPFAKPL (419 aa)) form an involved in localization to secretory granules; interaction with CPE region. The Extracellular portion of the chain corresponds to 20 to 613 (AAPSSVPHGR…QAEQEDSTKF (594 aa)). 4 disordered regions span residues 116–137 (RHPE…ERRY), 273–302 (MPRP…TGEG), 342–382 (DHRG…VQDD), and 401–487 (LQDH…SLPA). The span at 419 to 430 (LKMERKKSERPE) shows a compositional bias: basic and acidic residues. A phosphoserine mark is found at serine 434 and serine 435. Asparagine 562 carries N-linked (GlcNAc...) asparagine glycosylation. The helical transmembrane segment at 614–634 (IALTLVSLACILGVLLASGLI) threads the bilayer. Over 635 to 1013 (YCLRHSSQHR…VNAILKALPQ (379 aa)) the chain is Cytoplasmic. The short motif at 664-673 (YQELCRQRMA) is the Tyrosine-based internalization motif element. Residues 673-717 (ATRPPDRPEGPHTSRISSVSSQFSDGPMPSPSARSSASSWSEEPV) are disordered. Polar residues predominate over residues 686 to 696 (SRISSVSSQFS). 2 positions are modified to phosphoserine: serine 690 and serine 696. Positions 703–717 (PSARSSASSWSEEPV) are enriched in low complexity. Residues 743–1003 (LEKEWEALCA…EFALTAVAEE (261 aa)) form the Tyrosine-protein phosphatase domain. Substrate contacts are provided by residues aspartate 911 and 943–949 (CSDGAGR). Cysteine 943 acts as the Phosphocysteine intermediate in catalysis. At lysine 968 the chain carries N6-acetyllysine. Glutamine 988 contacts substrate. Positions 1002–1008 (EEVNAIL) match the Leucine-based sorting signal motif.

The protein belongs to the protein-tyrosine phosphatase family. Receptor class 8 subfamily. Self-associates. Interacts (via cytoplasmic domain) with PTPRN (via cytoplasmic domain). Interacts (precursor form) with CPE. Interacts with HAP1. Interacts with AP2A1 or AP2A2 and AP1G1; indicative for an association with adaptor protein complex 2 (AP-2) and adaptor protein complex 1 (AP-1). Interacts with AP2M1; indicative for an association with adaptor protein complex 2 (AP-2). Interacts with MYO5A. Post-translationally, subject to proteolytic cleavage at multiple sites. As to expression, detected in pancreatic islets and adrenal medulla.

It is found in the cytoplasmic vesicle. It localises to the secretory vesicle membrane. Its subcellular location is the secretory vesicle. The protein resides in the synaptic vesicle membrane. The catalysed reaction is O-phospho-L-tyrosyl-[protein] + H2O = L-tyrosyl-[protein] + phosphate. Functionally, plays a role in vesicle-mediated secretory processes. Required for normal accumulation of secretory vesicles in hippocampus, pituitary and pancreatic islets. Required for the accumulation of normal levels of insulin-containing vesicles and preventing their degradation. Plays a role in insulin secretion in response to glucose stimuli. Required for normal accumulation of the neurotransmitters norepinephrine, dopamine and serotonin in the brain. In females, but not in males, required for normal accumulation and secretion of pituitary hormones, such as luteinizing hormone (LH) and follicle-stimulating hormone (FSH). Required to maintain normal levels of renin expression and renin release. May regulate catalytic active protein-tyrosine phosphatases such as PTPRA through dimerization. Has phosphatidylinositol phosphatase activity; the PIPase activity is involved in its ability to regulate insulin secretion. Can dephosphorylate phosphatidylinositol 4,5-biphosphate, phosphatidylinositol 5-phosphate and phosphatidylinositol 3-phosphate. Regulates PI(4,5)P2 level in the plasma membrane and localization of cofilin at the plasma membrane and thus is indirectly involved in regulation of actin dynamics related to cell migration and metastasis; upon hydrolysis of PI(4,5)P2 cofilin is released from the plasma membrane and acts in the cytoplasm in severing F-actin filaments. In Macaca nemestrina (Pig-tailed macaque), this protein is Receptor-type tyrosine-protein phosphatase N2 (PTPRN2).